We begin with the raw amino-acid sequence, 133 residues long: MSGKGKVHGGKGKSSEIAKSSTSHSARAGLQFPVGRVKRYLKKQAQNKIRVGSKAAIYLTAVLEYLTAEVLELAGNAAKDLKVKRITPRHLQLAIRGDEELDNLIKATIAYGGVLPHINKALLLKVEKKKSHK.

The segment covering 1 to 11 has biased composition (basic residues); that stretch reads MSGKGKVHGGK. The disordered stretch occupies residues 1–30; it reads MSGKGKVHGGKGKSSEIAKSSTSHSARAGL. Serine 2 carries the post-translational modification N-acetylserine. 3 positions are modified to N6-acetyllysine: lysine 4, lysine 11, and lysine 13.

The protein belongs to the histone H2A family. The nucleosome is a histone octamer containing two molecules each of H2A, H2B, H3 and H4 assembled in one H3-H4 heterotetramer and two H2A-H2B heterodimers. The octamer wraps approximately 147 bp of DNA. H2A or its variant H2A.Z forms a heterodimer with H2B. H2A.Z associates with the VPS72/SWC2 subunit of the SWR1 chromatin remodeling complex. Also interacts with RBP1/DNA-directed RNA polymerase II largest subunit. In terms of processing, acetylated once deposited into chromatin.

The protein resides in the nucleus. It is found in the chromosome. Functionally, variant histone H2A which can replace H2A in some nucleosomes. Nucleosomes wrap and compact DNA into chromatin, limiting DNA accessibility to the cellular machineries which require DNA as a template. Histones thereby play a central role in transcription regulation, DNA repair, DNA replication and chromosomal stability. DNA accessibility is regulated via a complex set of post-translational modifications of histones, also called histone code, and nucleosome remodeling. This variant is enriched at promoters, it may keep them in a repressed state until the appropriate activation signal is received. Near telomeres, it may counteract gene silencing caused by the spread of heterochromatin proteins. Required for the RNA polymerase II and SPT15/TBP recruitment to the target genes. Involved in chromosome stability. This is Histone H2A.Z (HTZ1) from Lodderomyces elongisporus (strain ATCC 11503 / CBS 2605 / JCM 1781 / NBRC 1676 / NRRL YB-4239) (Yeast).